A 124-amino-acid polypeptide reads, in one-letter code: Large ribosomal subunit protein bL12 (124 aa).

Belongs to the bacterial ribosomal protein bL12 family. Homodimer. Part of the ribosomal stalk of the 50S ribosomal subunit. Forms a multimeric L10(L12)X complex, where L10 forms an elongated spine to which 2 to 4 L12 dimers bind in a sequential fashion. Binds GTP-bound translation factors.

Functionally, forms part of the ribosomal stalk which helps the ribosome interact with GTP-bound translation factors. Is thus essential for accurate translation. The chain is Large ribosomal subunit protein bL12 from Bacteroides fragilis (strain ATCC 25285 / DSM 2151 / CCUG 4856 / JCM 11019 / LMG 10263 / NCTC 9343 / Onslow / VPI 2553 / EN-2).